We begin with the raw amino-acid sequence, 156 residues long: Transcription antitermination protein NusB (156 aa).

It belongs to the NusB family.

In terms of biological role, involved in transcription antitermination. Required for transcription of ribosomal RNA (rRNA) genes. Binds specifically to the boxA antiterminator sequence of the ribosomal RNA (rrn) operons. The polypeptide is Transcription antitermination protein NusB (Rickettsia bellii (strain OSU 85-389)).